A 539-amino-acid chain; its full sequence is Chaperonin GroEL (539 aa).

ATP-binding positions include 30–33 (TLGP), 87–91 (DGTTT), Gly414, 479–481 (DAL), and Asp495.

Belongs to the chaperonin (HSP60) family. Forms a cylinder of 14 subunits composed of two heptameric rings stacked back-to-back. Interacts with the co-chaperonin GroES.

It localises to the cytoplasm. It carries out the reaction ATP + H2O + a folded polypeptide = ADP + phosphate + an unfolded polypeptide.. Its function is as follows. Together with its co-chaperonin GroES, plays an essential role in assisting protein folding. The GroEL-GroES system forms a nano-cage that allows encapsulation of the non-native substrate proteins and provides a physical environment optimized to promote and accelerate protein folding. This chain is Chaperonin GroEL, found in Caldicellulosiruptor bescii (strain ATCC BAA-1888 / DSM 6725 / KCTC 15123 / Z-1320) (Anaerocellum thermophilum).